The primary structure comprises 114 residues: Nucleoid-associated protein SGR_3378 (114 aa).

Belongs to the YbaB/EbfC family. Homodimer.

Its subcellular location is the cytoplasm. The protein resides in the nucleoid. In terms of biological role, binds to DNA and alters its conformation. May be involved in regulation of gene expression, nucleoid organization and DNA protection. This Streptomyces griseus subsp. griseus (strain JCM 4626 / CBS 651.72 / NBRC 13350 / KCC S-0626 / ISP 5235) protein is Nucleoid-associated protein SGR_3378.